A 137-amino-acid chain; its full sequence is Small ribosomal subunit protein uS12 (137 aa).

The interval 1–24 (MPTINQLVRKGRRSQSSKSKAPAL) is disordered. 3-methylthioaspartic acid is present on D102.

It belongs to the universal ribosomal protein uS12 family. As to quaternary structure, part of the 30S ribosomal subunit. Contacts proteins S8 and S17. May interact with IF1 in the 30S initiation complex.

Its function is as follows. With S4 and S5 plays an important role in translational accuracy. Functionally, interacts with and stabilizes bases of the 16S rRNA that are involved in tRNA selection in the A site and with the mRNA backbone. Located at the interface of the 30S and 50S subunits, it traverses the body of the 30S subunit contacting proteins on the other side and probably holding the rRNA structure together. The combined cluster of proteins S8, S12 and S17 appears to hold together the shoulder and platform of the 30S subunit. The polypeptide is Small ribosomal subunit protein uS12 (Pediococcus pentosaceus (strain ATCC 25745 / CCUG 21536 / LMG 10740 / 183-1w)).